Here is a 1411-residue protein sequence, read N- to C-terminus: Alpha-latroinsectotoxin-Lt1a (1411 aa).

A propeptide spanning residues 1–35 (ACSSPEVSIFHFFVYAGSFVKNFKKMKGSSAISKR) is cleaved from the precursor. Residues 245–264 (ALYALFYGTETFISIMFYLV) are helix H8 is the probable transmembrane region of the tetrameric pore inserted in the target cell membrane. ANK repeat units lie at residues 462–495 (DIHR…NVSE), 499–528 (LGRG…NLLE), 533–562 (NGYT…DVNV), 567–597 (DLFT…DLNA), 601–630 (SGFT…VINI), 634–663 (VGLT…YLND), 667–697 (NGMT…NINA), 702–732 (KKWT…NIRL), 736–765 (GGIN…DVTR), 769–798 (KGFS…NVND), 802–831 (SGVT…DIKA), 835–864 (NSQM…SLMN), 869–898 (RNEY…NVNE), 902–931 (NGNT…NFRL), 935–965 (ERKT…NLQA), 968–999 (RGKT…LNES), 1000–1029 (ECNP…NPAE), 1080–1109 (QENT…DPNQ), 1112–1142 (DGDP…DINT), and 1146–1175 (ERFT…DVNA). Positions 1196-1411 (QSSRFLRSGH…KVNSNVSQIK (216 aa)) are excised as a propeptide. Over residues 1230–1249 (DKLTQQISSKGTRSDSNSTE) the composition is skewed to polar residues. The segment at 1230-1254 (DKLTQQISSKGTRSDSNSTEGKMHS) is disordered. The stretch at 1331 to 1361 (NVHSKIYKAIMSGRRSVISEMLCSFAEEYSK) is one ANK 21 repeat.

It belongs to the cationic peptide 01 (latrotoxin) family. 02 (alpha-latroinsectotoxin) subfamily. As to quaternary structure, homotetramer in membranes. As to expression, expressed by the venom gland.

The protein localises to the secreted. Its subcellular location is the target cell membrane. Functionally, insecticidal presynaptic neurotoxin that induces massive neurotransmitter release at insect (but not vertebrate) neuromuscular junctions. Native toxin forms cation-permeable pores (with high permeability to calcium) in lipid membranes locust muscle membrane and artificial lipid bilayers. May bind to insect neurexin-1 homolog, insect adhesion G protein-coupled receptor L1 homolog, and insect receptor-type tyrosine-protein phosphatase S homolog, and induces neurotransmitter exocytosis both by forming tetrameric pores in membranes and signaling via G protein-coupled receptor. Oligomerization is a process independent of divalent cations. The toxin forms channels with 0.55-0.58 nm entrance diameter and a relatively small conductance in planar phospholipid membranes. In Latrodectus tredecimguttatus (Mediterranean black widow spider), this protein is Alpha-latroinsectotoxin-Lt1a.